A 469-amino-acid polypeptide reads, in one-letter code: Tubulin gamma chain (469 aa).

142–148 (AGGTGSG) is a GTP binding site.

This sequence belongs to the tubulin family.

It is found in the cytoplasm. The protein localises to the cytoskeleton. The protein resides in the microtubule organizing center. It localises to the spindle pole body. Functionally, tubulin is the major constituent of microtubules. The gamma chain is found at microtubule organizing centers (MTOC) such as the spindle poles or the centrosome, suggesting that it is involved in the minus-end nucleation of microtubule assembly. This Microbotryum violaceum (Anther smut fungus) protein is Tubulin gamma chain (TUB4).